Consider the following 627-residue polypeptide: Asparagine synthetase domain-containing protein 1 (627 aa).

Residue cysteine 2 is the For GATase activity of the active site. Residues cysteine 2–asparagine 184 form the Glutamine amidotransferase type-2 domain. The Asparagine synthetase domain occupies alanine 308–lysine 597. Positions glutamine 373–threonine 404 are disordered.

This Mus musculus (Mouse) protein is Asparagine synthetase domain-containing protein 1 (Asnsd1).